The chain runs to 183 residues: uncharacterized protein (183 aa).

The signal sequence occupies residues 1–23 (MSAFKKSLLVAGVAMILSNNVFA). Cys41 and Cys80 form a disulfide bridge.

It belongs to the fimbrial protein family.

Its subcellular location is the fimbrium. This is an uncharacterized protein from Escherichia coli (strain K12).